Consider the following 155-residue polypeptide: Small ribosomal subunit protein uS7cz/uS7cy (155 aa).

Belongs to the universal ribosomal protein uS7 family. Part of the 30S ribosomal subunit.

Its subcellular location is the plastid. One of the primary rRNA binding proteins, it binds directly to 16S rRNA where it nucleates assembly of the head domain of the 30S subunit. This Cuscuta exaltata (Tall dodder) protein is Small ribosomal subunit protein uS7cz/uS7cy (rps7-A).